Consider the following 299-residue polypeptide: GTPase Era (299 aa).

One can recognise an Era-type G domain in the interval 4–171 (KSGFVAILGR…MEILKENLDE (168 aa)). Residues 12–19 (GRPNVGKS) form a G1 region. 12 to 19 (GRPNVGKS) serves as a coordination point for GTP. The G2 stretch occupies residues 38–42 (QTTRN). Residues 59–62 (DTPG) form a G3 region. GTP is bound by residues 59–63 (DTPGI) and 121–124 (NKID). Positions 121–124 (NKID) are G4. Residues 150-152 (ISA) are G5. The KH type-2 domain occupies 202 to 280 (TREEIPHSVA…FLETWVKVKK (79 aa)).

Belongs to the TRAFAC class TrmE-Era-EngA-EngB-Septin-like GTPase superfamily. Era GTPase family. As to quaternary structure, monomer.

It is found in the cytoplasm. Its subcellular location is the cell membrane. An essential GTPase that binds both GDP and GTP, with rapid nucleotide exchange. Plays a role in 16S rRNA processing and 30S ribosomal subunit biogenesis and possibly also in cell cycle regulation and energy metabolism. In Streptococcus suis (strain 98HAH33), this protein is GTPase Era.